Here is a 333-residue protein sequence, read N- to C-terminus: MRNACTRARLTRTARAMVKTLFIAIASVTFFFTSDLALPQSAAAYPFWAQQTYPETPREPTGRIVCANCHLAAKPTEVEVPQSVLPDTVFKAVVKIPYDTSVQQVGADGSKVGLNVGAVLMLPEGFKIAPEDRIPEELKEEIGDVYFQPYGEDKDNIVIVGPLPGEQYQEIVFPVLSPNPANDKNIHFGKYSVHVGGNRGRGQVYPTGEKSNNNLYSAAATGTISKIAKQEGEDGSVKYLVDIKTESGEVVSDTIPAGPELIVSEGQAVTAGDALTNNPNVGGFGQLDAEIVLQDANRVGWLIAFVALVMLAQVMLVLKKKQVEKVQAAEMNF.

Positions M1–A44 are cleaved as a signal peptide. Positions 45, 66, 69, and 70 each coordinate heme. The chain crosses the membrane as a helical span at residues V299–L318.

This sequence belongs to the cytochrome f family. The 4 large subunits of the cytochrome b6-f complex are cytochrome b6, subunit IV (17 kDa polypeptide, PetD), cytochrome f and the Rieske protein, while the 4 small subunits are PetG, PetL, PetM and PetN. The complex functions as a dimer. The cofactor is heme.

Its subcellular location is the cellular thylakoid membrane. In terms of biological role, component of the cytochrome b6-f complex, which mediates electron transfer between photosystem II (PSII) and photosystem I (PSI), cyclic electron flow around PSI, and state transitions. The chain is Cytochrome f from Nostoc sp. (strain PCC 7120 / SAG 25.82 / UTEX 2576).